A 1305-amino-acid polypeptide reads, in one-letter code: Serine protease EspC (1305 aa).

A signal peptide spans 1–53; the sequence is MNKIYALKYCHATGGLIAVSELASRVMKKAARGSLLALFNLSLYGAFLSASQA. The 243-residue stretch at 55–297 folds into the Peptidase S6 domain; it reads QLNIDNVWAR…SILNQYDENT (243 aa). Residues His-125, Asp-153, and Ser-256 each act as charge relay system in the active site. The region spanning 1039–1305 is the Autotransporter domain; it reads DTQGDAGVWA…AINANFRYSF (267 aa).

In terms of processing, cleaved to release the mature protein from the outer membrane.

The protein localises to the periplasm. Its subcellular location is the secreted. It localises to the cell surface. The protein resides in the cell outer membrane. Its activity is regulated as follows. Inhibition of cytotoxic activity by phenylmethylsulfonyl fluoride. Functionally, serine protease with enterotoxic and cytotoxic activities. Cleaves fodrin, but does not cause its redistribution within epithelial cells. The exact role of EspC in EPEC pathogenesis is still unknown. This chain is Serine protease EspC (espC), found in Escherichia coli O127:H6 (strain E2348/69 / EPEC).